Consider the following 311-residue polypeptide: Cell division protein ZipA (311 aa).

Topologically, residues 1 to 5 are periplasmic; that stretch reads MQELR. A helical transmembrane segment spans residues 6-26; sequence FVLIVVGALAIMALLFHGLWT. Residues 27 to 311 are Cytoplasmic-facing; the sequence is SKKEGKAKFG…QIVEFKAANA (285 aa). A compositionally biased stretch (basic and acidic residues) spans 32 to 54; sequence KAKFGDKPLSKLDLGESEPKESE. Residues 32–60 are disordered; it reads KAKFGDKPLSKLDLGESEPKESEMYVAPE.

This sequence belongs to the ZipA family. Interacts with FtsZ via their C-terminal domains.

It is found in the cell inner membrane. Its function is as follows. Essential cell division protein that stabilizes the FtsZ protofilaments by cross-linking them and that serves as a cytoplasmic membrane anchor for the Z ring. Also required for the recruitment to the septal ring of downstream cell division proteins. This is Cell division protein ZipA from Vibrio vulnificus (strain CMCP6).